The sequence spans 424 residues: Multifunctional CCA protein (424 aa).

ATP-binding residues include glycine 8 and arginine 11. CTP-binding residues include glycine 8 and arginine 11. Residues aspartate 21 and aspartate 23 each coordinate Mg(2+). ATP-binding residues include arginine 91, arginine 149, and arginine 152. Positions 91, 149, and 152 each coordinate CTP. Positions 238 to 339 (TGIHLMMVLD…VRLLERCDAF (102 aa)) constitute an HD domain.

This sequence belongs to the tRNA nucleotidyltransferase/poly(A) polymerase family. Bacterial CCA-adding enzyme type 1 subfamily. As to quaternary structure, monomer. Can also form homodimers and oligomers. The cofactor is Mg(2+). It depends on Ni(2+) as a cofactor.

It catalyses the reaction a tRNA precursor + 2 CTP + ATP = a tRNA with a 3' CCA end + 3 diphosphate. It carries out the reaction a tRNA with a 3' CCA end + 2 CTP + ATP = a tRNA with a 3' CCACCA end + 3 diphosphate. Its function is as follows. Catalyzes the addition and repair of the essential 3'-terminal CCA sequence in tRNAs without using a nucleic acid template. Adds these three nucleotides in the order of C, C, and A to the tRNA nucleotide-73, using CTP and ATP as substrates and producing inorganic pyrophosphate. tRNA 3'-terminal CCA addition is required both for tRNA processing and repair. Also involved in tRNA surveillance by mediating tandem CCA addition to generate a CCACCA at the 3' terminus of unstable tRNAs. While stable tRNAs receive only 3'-terminal CCA, unstable tRNAs are marked with CCACCA and rapidly degraded. The protein is Multifunctional CCA protein of Polaromonas naphthalenivorans (strain CJ2).